Consider the following 241-residue polypeptide: MNKDTIFSAPIEKLGDFTFDESVAEVFPDMIQRSVPGYSNIITAIGMLAQRFVTEGSQVYDLGCSRGAGILSIRRNLQTNQVKIIGVDNSQPMVERCRSHINAYHSEVPVEILCDDIRHIEIKNASMVVLNFTLQFLPRADRLELLTKIYQGLNPNGILVLSEKFTFENQVMNELLIDLHHTFKRANGYSELEVSQKRTALENVMLTDSIETHKDRLKQAGFSQIELWFQCFNFGSMIAVK.

S-adenosyl-L-methionine contacts are provided by residues Y38, 63–65 (GCS), 88–89 (DN), 116–117 (DI), N131, and R198.

This sequence belongs to the class I-like SAM-binding methyltransferase superfamily. Cx-SAM synthase family. In terms of assembly, homodimer.

The enzyme catalyses prephenate + S-adenosyl-L-methionine = carboxy-S-adenosyl-L-methionine + 3-phenylpyruvate + H2O. Catalyzes the conversion of S-adenosyl-L-methionine (SAM) to carboxy-S-adenosyl-L-methionine (Cx-SAM). The chain is Carboxy-S-adenosyl-L-methionine synthase from Actinobacillus pleuropneumoniae serotype 5b (strain L20).